The chain runs to 289 residues: Ketose 3-epimerase (289 aa).

The Proton donor/acceptor role is filled by Glu-146. A Mn(2+)-binding site is contributed by Glu-146. Substrate is bound by residues Glu-152 and 179-182; that span reads DTYH. Residues Asp-179 and His-205 each contribute to the Mn(2+) site. Arg-211 lines the substrate pocket. Glu-240 (proton donor/acceptor) is an active-site residue. Residue Glu-240 participates in Mn(2+) binding.

The protein belongs to the hyi family. Homotetramer. Mg(2+) is required as a cofactor. Mn(2+) serves as cofactor. Requires Co(2+) as cofactor.

It catalyses the reaction L-ribulose = L-xylulose. The enzyme catalyses D-allulose = keto-D-fructose. It carries out the reaction keto-L-tagatose = keto-L-sorbose. The catalysed reaction is D-ribulose = D-xylulose. It catalyses the reaction L-allulose = keto-L-fructose. The enzyme catalyses keto-D-tagatose = keto-D-sorbose. Catalyzes the reversible C-3 epimerization of several ketoses. Shows the highest enzymatic activity for the epimerization of L-ribulose to L-xylulose. Is also able to convert D-allulose (also known as D-psicose) to D-fructose and, to a lesser extent, L-tagatose to L-sorbose, D-ribulose to D-xylulose, L-allulose to L-fructose and D-tagatose to D-sorbose. The protein is Ketose 3-epimerase of Arthrobacter globiformis.